We begin with the raw amino-acid sequence, 253 residues long: Ribosomal RNA small subunit methyltransferase J (253 aa).

S-adenosyl-L-methionine is bound by residues 98–99, 114–115, 150–151, and D172; these read RD, ER, and SS.

This sequence belongs to the methyltransferase superfamily. RsmJ family.

The protein localises to the cytoplasm. It carries out the reaction guanosine(1516) in 16S rRNA + S-adenosyl-L-methionine = N(2)-methylguanosine(1516) in 16S rRNA + S-adenosyl-L-homocysteine + H(+). Specifically methylates the guanosine in position 1516 of 16S rRNA. This is Ribosomal RNA small subunit methyltransferase J from Shewanella pealeana (strain ATCC 700345 / ANG-SQ1).